The following is a 340-amino-acid chain: Tartrate-resistant acid phosphatase type 5 (340 aa).

Positions 1–20 are cleaved as a signal peptide; it reads MDTWTVLLILQASLVLPGAV. Aspartate 41, aspartate 79, tyrosine 82, and asparagine 118 together coordinate Fe cation. Residues asparagine 124 and asparagine 155 are each glycosylated (N-linked (GlcNAc...) asparagine). Cysteine 169 and cysteine 227 are joined by a disulfide. Residues histidine 213, histidine 248, and histidine 250 each contribute to the Fe cation site.

Requires Fe cation as cofactor.

It is found in the secreted. The catalysed reaction is a phosphate monoester + H2O = an alcohol + phosphate. Its function is as follows. Uteroferrin is a phosphoprotein phosphatase, synthesized in response to progesterone. It appears to function in transplacental transport of iron in pig. In Sus scrofa (Pig), this protein is Tartrate-resistant acid phosphatase type 5 (ACP5).